Here is a 716-residue protein sequence, read N- to C-terminus: Ciliary WD repeat-containing protein ctxp80 (716 aa).

A disordered region spans residues 1–53 (MGCGGSSGASDPSSEKINWNNAEIHDEFKQEQKKAGAKRKAFDKTTGKAVEKE). The segment covering 8–21 (GASDPSSEKINWNN) has biased composition (polar residues). Positions 23 to 53 (EIHDEFKQEQKKAGAKRKAFDKTTGKAVEKE) are enriched in basic and acidic residues. WD repeat units follow at residues 167-208 (YHTN…KKGR), 213-254 (KGGR…QVKK), 257-297 (SGPD…FKKK), 305-343 (GKPT…STYD), 345-382 (HGKG…AEKT), 424-462 (HSDG…STAL), 529-568 (DSGE…KLGT), 571-610 (AHNS…QDPS), 639-678 (TDGT…GATP), and 683-715 (GHSE…QWKK).

It belongs to the WD repeat EMAP family.

This is Ciliary WD repeat-containing protein ctxp80 from Euplotoides octocarinatus (Freshwater ciliate).